We begin with the raw amino-acid sequence, 489 residues long: Rhamnulokinase (489 aa).

ATP is bound at residue 13–17 (ASSGR). Cys-68 and Cys-222 form a disulfide bridge. Substrate is bound by residues Gly-83 and 236-238 (HDT). Residue Asp-237 is the Proton acceptor of the active site. Thr-259 lines the ATP pocket. Asn-296 contacts substrate. ATP is bound at residue Gln-304. A disulfide bond links Cys-353 and Cys-370. ATP is bound at residue Gly-402. A disulfide bridge links Cys-413 with Cys-417.

This sequence belongs to the rhamnulokinase family. As to quaternary structure, monomer. Mg(2+) serves as cofactor.

The enzyme catalyses L-rhamnulose + ATP = L-rhamnulose 1-phosphate + ADP + H(+). It functions in the pathway carbohydrate degradation; L-rhamnose degradation; glycerone phosphate from L-rhamnose: step 2/3. Functionally, involved in the catabolism of L-rhamnose (6-deoxy-L-mannose). Catalyzes the transfer of the gamma-phosphate group from ATP to the 1-hydroxyl group of L-rhamnulose to yield L-rhamnulose 1-phosphate. In Escherichia coli O7:K1 (strain IAI39 / ExPEC), this protein is Rhamnulokinase.